Here is a 383-residue protein sequence, read N- to C-terminus: Erythronate-4-phosphate dehydrogenase (383 aa).

Substrate is bound by residues S45 and T66. NAD(+)-binding residues include D146 and T175. Residue R208 is part of the active site. Position 232 (D232) interacts with NAD(+). E237 is an active-site residue. H254 functions as the Proton donor in the catalytic mechanism. G257 contributes to the NAD(+) binding site.

This sequence belongs to the D-isomer specific 2-hydroxyacid dehydrogenase family. PdxB subfamily. In terms of assembly, homodimer.

It localises to the cytoplasm. It catalyses the reaction 4-phospho-D-erythronate + NAD(+) = (R)-3-hydroxy-2-oxo-4-phosphooxybutanoate + NADH + H(+). Its pathway is cofactor biosynthesis; pyridoxine 5'-phosphate biosynthesis; pyridoxine 5'-phosphate from D-erythrose 4-phosphate: step 2/5. In terms of biological role, catalyzes the oxidation of erythronate-4-phosphate to 3-hydroxy-2-oxo-4-phosphonooxybutanoate. This is Erythronate-4-phosphate dehydrogenase from Chromohalobacter salexigens (strain ATCC BAA-138 / DSM 3043 / CIP 106854 / NCIMB 13768 / 1H11).